A 201-amino-acid polypeptide reads, in one-letter code: MRLRNIPDALERIQNQNLLVKTPWNIDDSWIIEIGMGKGKMISQLAFDNPNKNFLGVEKYPSAAVKSIKYVKKYNLSNFFILISDAKDLLDQIKGKASTIWLTFPDPWPKNRHYKRRLTYKDFLKIYANLLVKDGILKLKTDNLKFFEFSIESLKENGWKITYQTNDLHNSLVNSSNIKTTYEEKWVNLNYKIHYLEAIFI.

S-adenosyl-L-methionine-binding residues include Glu33, Glu58, Asp85, and Asp106. The active site involves Asp106. Residues Lys110, Asp142, and 180–183 (TTYE) each bind substrate.

The protein belongs to the class I-like SAM-binding methyltransferase superfamily. TrmB family.

The catalysed reaction is guanosine(46) in tRNA + S-adenosyl-L-methionine = N(7)-methylguanosine(46) in tRNA + S-adenosyl-L-homocysteine. It functions in the pathway tRNA modification; N(7)-methylguanine-tRNA biosynthesis. In terms of biological role, catalyzes the formation of N(7)-methylguanine at position 46 (m7G46) in tRNA. This Mesomycoplasma hyopneumoniae (strain 232) (Mycoplasma hyopneumoniae) protein is tRNA (guanine-N(7)-)-methyltransferase.